Consider the following 328-residue polypeptide: Methionyl-tRNA formyltransferase (328 aa).

110-113 (SLLP) lines the (6S)-5,6,7,8-tetrahydrofolate pocket.

Belongs to the Fmt family.

It catalyses the reaction L-methionyl-tRNA(fMet) + (6R)-10-formyltetrahydrofolate = N-formyl-L-methionyl-tRNA(fMet) + (6S)-5,6,7,8-tetrahydrofolate + H(+). In terms of biological role, attaches a formyl group to the free amino group of methionyl-tRNA(fMet). The formyl group appears to play a dual role in the initiator identity of N-formylmethionyl-tRNA by promoting its recognition by IF2 and preventing the misappropriation of this tRNA by the elongation apparatus. This is Methionyl-tRNA formyltransferase from Prochlorococcus marinus (strain MIT 9515).